The primary structure comprises 330 residues: Putative aminopeptidase (330 aa).

The a divalent metal cation site is built by His65 and Asp168. Residue Glu198 is the Proton acceptor of the active site. Positions 199, 221, and 307 each coordinate a divalent metal cation.

Belongs to the peptidase M42 family. A divalent metal cation is required as a cofactor.

This is Putative aminopeptidase (celM) from Acetivibrio thermocellus (Hungateiclostridium thermocellum).